Consider the following 279-residue polypeptide: Osmoprotective compounds uptake permease protein GgtC (279 aa).

A run of 7 helical transmembrane segments spans residues 7-27 (LLFL…LSFF), 58-78 (LWLV…AVLV), 90-110 (IIFL…KFVY), 120-140 (IGLL…WLVE), 146-166 (FALI…ILSA), 202-222 (LLVV…IVFV), and 247-267 (FGRG…VMIT). Residues 53–270 (FRNNLLWLVL…IVPVMITNIR (218 aa)) enclose the ABC transmembrane type-1 domain.

Belongs to the binding-protein-dependent transport system permease family. In terms of assembly, the complex is composed of two ATP-binding proteins (GgtA), two transmembrane proteins (GgtC and GgtD) and a solute-binding protein (GgtB).

Its subcellular location is the cell membrane. Part of the ABC transporter complex GgtABCD involved in the uptake of the osmoprotective compounds glucosylglycerol (GG), sucrose and trehalose. Responsible for the translocation of the substrate across the membrane. The protein is Osmoprotective compounds uptake permease protein GgtC of Synechocystis sp. (strain ATCC 27184 / PCC 6803 / Kazusa).